The sequence spans 219 residues: Albonoursin synthase (219 aa).

The protein belongs to the nitroreductase family. In terms of assembly, homomer. It depends on FMN as a cofactor. In terms of processing, the N-terminus is blocked.

Its subcellular location is the cytoplasm. The catalysed reaction is cyclo(L-phenylalanyl-L-leucyl) + 2 O2 = albonoursin + 2 H2O2. Functionally, involved in the biosynthesis of albonoursin (cyclo[(alpha,beta-dehydro-Phe)-(alpha,beta-dehydro-Leu)]), an antibacterial peptide. Catalyzes the formation of alpha,beta-dehydro-Phe (DPhe) and alpha,beta-dehydro-Leu (DLeu) residues during the biosynthesis of albonoursin. The catalytic reaction of cyclo(L-Phe-L-Leu) occurs in a two-step sequential alpha-beta-dehydrogenation leading first to cyclo(alpha,beta-dehydro-Phe-L-Leu) and finally to albonoursin. Can also use cyclo(L-Phe-L-His), cyclo(L-Trp-L-Trp), cyclo(L-Leu-L-Ala), cyclo(L-Phe-Gly), cyclo(L-Leu-Gly), cyclo(L-Ser-Gly) and cyclo(L-Glu-Gly) as substrate suggesting that the diketopiperazine ring is essential for the enzymatic reaction. The sequence is that of Albonoursin synthase (albA) from Streptomyces noursei (Streptomyces albulus).